Reading from the N-terminus, the 101-residue chain is Small ribosomal subunit protein uS14 (101 aa).

Belongs to the universal ribosomal protein uS14 family. As to quaternary structure, part of the 30S ribosomal subunit. Contacts proteins S3 and S10.

Functionally, binds 16S rRNA, required for the assembly of 30S particles and may also be responsible for determining the conformation of the 16S rRNA at the A site. This Buchnera aphidicola subsp. Schizaphis graminum (strain Sg) protein is Small ribosomal subunit protein uS14.